An 884-amino-acid polypeptide reads, in one-letter code: Probable LRR receptor-like serine/threonine-protein kinase PAM74 (884 aa).

An N-terminal signal peptide occupies residues methionine 1 to alanine 23. Topologically, residues glutamine 24–proline 510 are extracellular. 12 N-linked (GlcNAc...) asparagine glycosylation sites follow: asparagine 143, asparagine 182, asparagine 200, asparagine 256, asparagine 289, asparagine 400, asparagine 403, asparagine 417, asparagine 433, asparagine 444, asparagine 465, and asparagine 470. 3 LRR repeats span residues arginine 412–asparagine 433, histidine 436–glutamine 457, and serine 460–arginine 480. A helical membrane pass occupies residues valine 511–phenylalanine 531. Residues valine 532 to arginine 884 are Cytoplasmic-facing. Threonine 570 carries the phosphothreonine modification. Residues asparagine 579 to leucine 852 enclose the Protein kinase domain. ATP is bound by residues valine 585 to valine 593 and lysine 607. Residue tyrosine 652 is modified to Phosphotyrosine. The active-site Proton acceptor is the aspartate 704. Serine 738 carries the phosphoserine modification. A phosphothreonine mark is found at threonine 739 and threonine 744. The residue at position 752 (tyrosine 752) is a Phosphotyrosine.

It belongs to the protein kinase superfamily. Ser/Thr protein kinase family. As to quaternary structure, binds to the ammonium transporter AMT1-1.

The protein resides in the membrane. It carries out the reaction L-seryl-[protein] + ATP = O-phospho-L-seryl-[protein] + ADP + H(+). The catalysed reaction is L-threonyl-[protein] + ATP = O-phospho-L-threonyl-[protein] + ADP + H(+). In terms of biological role, required for accurate photosynthesis. The sequence is that of Probable LRR receptor-like serine/threonine-protein kinase PAM74 (PAM74) from Arabidopsis thaliana (Mouse-ear cress).